The following is a 235-amino-acid chain: Probable flavin-dependent thymidylate synthase (235 aa).

A ThyX domain is found at 1–229; the sequence is MKVQLIASTI…PNTYQDIPTE (229 aa). Residues S70 and 93 to 95 contribute to the FAD site; that span reads RHR. DUMP is bound by residues 90–93, 103–105, and R168; these read ELER and SQR. A ThyX motif motif is present at residues 93 to 103; that stretch reads RHRHLSFSVVS. Residue 184–186 participates in FAD binding; that stretch reads NHR. R195 is a binding site for dUMP. The active-site Involved in ionization of N3 of dUMP, leading to its activation is R195.

Belongs to the thymidylate synthase ThyX family. In terms of assembly, homotetramer. FAD is required as a cofactor.

The catalysed reaction is dUMP + (6R)-5,10-methylene-5,6,7,8-tetrahydrofolate + NADPH + H(+) = dTMP + (6S)-5,6,7,8-tetrahydrofolate + NADP(+). It functions in the pathway pyrimidine metabolism; dTTP biosynthesis. Its function is as follows. Catalyzes the reductive methylation of 2'-deoxyuridine-5'-monophosphate (dUMP) to 2'-deoxythymidine-5'-monophosphate (dTMP) while utilizing 5,10-methylenetetrahydrofolate (mTHF) as the methyl donor, and NADPH and FADH(2) as the reductant. The chain is Probable flavin-dependent thymidylate synthase (48) from Mycobacterium (Mycobacteriophage D29).